The primary structure comprises 364 residues: FMNH(2)-dependent dimethylsulfone monooxygenase (364 aa).

The protein belongs to the SsuD family.

It catalyses the reaction dimethyl sulfone + FMNH2 + O2 = methanesulfinate + FMN + formaldehyde + H2O + 2 H(+). Involved in the dimethyl sulfide degradation pathway. Catalyzes the oxidation of dimethylsulfone (DMSO2) to yield methanesulfinate, which is oxidized spontaneously to methanesulfonate in the presence of dioxygen and FMNH(2). The chain is FMNH(2)-dependent dimethylsulfone monooxygenase from Pseudomonas fluorescens (strain Pf0-1).